A 130-amino-acid polypeptide reads, in one-letter code: Histone H2A type 2-B (130 aa).

A disordered region spans residues 1–22; the sequence is MSGRGKQGGKARAKAKSRSSRA. N-acetylserine is present on Ser2. Ser2 carries the phosphoserine; by RPS6KA5 modification. Arg4 carries the post-translational modification Citrulline; alternate. Symmetric dimethylarginine; by PRMT5; alternate is present on Arg4. Lys6 bears the N6-(2-hydroxyisobutyryl)lysine mark. Basic residues predominate over residues 7–19; the sequence is QGGKARAKAKSRS. At Lys10 the chain carries N6-(2-hydroxyisobutyryl)lysine; alternate. Residues Lys10 and Lys14 each carry the N6-(beta-hydroxybutyryl)lysine; alternate modification. At Lys10 the chain carries N6-lactoyllysine; alternate. The residue at position 10 (Lys10) is an N6-succinyllysine; alternate. A Glycyl lysine isopeptide (Lys-Gly) (interchain with G-Cter in ubiquitin); alternate cross-link involves residue Lys14. Lys16 is covalently cross-linked (Glycyl lysine isopeptide (Lys-Gly) (interchain with G-Cter in ubiquitin)). Residue Lys37 is modified to N6-(2-hydroxyisobutyryl)lysine; alternate. At Lys37 the chain carries N6-(beta-hydroxybutyryl)lysine; alternate. Lys37 is modified (N6-crotonyllysine; alternate). N6-(2-hydroxyisobutyryl)lysine occurs at positions 75 and 76. Lys96 carries the post-translational modification N6-(2-hydroxyisobutyryl)lysine; alternate. At Lys96 the chain carries N6-(beta-hydroxybutyryl)lysine; alternate. Lys96 bears the N6-succinyllysine; alternate mark. Lys96 is subject to N6-glutaryllysine; alternate. The residue at position 105 (Gln105) is an N5-methylglutamine. An N6-(2-hydroxyisobutyryl)lysine; alternate modification is found at Lys119. Lys119 bears the N6-(beta-hydroxybutyryl)lysine; alternate mark. An N6-crotonyllysine; alternate mark is found at Lys119 and Lys120. 2 positions are modified to N6-glutaryllysine; alternate: Lys119 and Lys120. Residue Lys120 forms a Glycyl lysine isopeptide (Lys-Gly) (interchain with G-Cter in ubiquitin); alternate linkage. Phosphothreonine; by DCAF1 is present on Thr121.

Belongs to the histone H2A family. The nucleosome is a histone octamer containing two molecules each of H2A, H2B, H3 and H4 assembled in one H3-H4 heterotetramer and two H2A-H2B heterodimers. The octamer wraps approximately 147 bp of DNA. Deiminated on Arg-4 in granulocytes upon calcium entry. In terms of processing, monoubiquitination of Lys-120 (H2AK119Ub) by RING1, TRIM37 and RNF2/RING2 complex gives a specific tag for epigenetic transcriptional repression and participates in X chromosome inactivation of female mammals. It is involved in the initiation of both imprinted and random X inactivation. Ubiquitinated H2A is enriched in inactive X chromosome chromatin. Ubiquitination of H2A functions downstream of methylation of 'Lys-27' of histone H3 (H3K27me). H2AK119Ub by RNF2/RING2 can also be induced by ultraviolet and may be involved in DNA repair. Monoubiquitination of Lys-120 (H2AK119Ub) by TRIM37 may promote transformation of cells in a number of breast cancers. Following DNA double-strand breaks (DSBs), it is ubiquitinated through 'Lys-63' linkage of ubiquitin moieties by the E2 ligase UBE2N and the E3 ligases RNF8 and RNF168, leading to the recruitment of repair proteins to sites of DNA damage. Ubiquitination at Lys-14 and Lys-16 (H2AK13Ub and H2AK15Ub, respectively) in response to DNA damage is initiated by RNF168 that mediates monoubiquitination at these 2 sites, and 'Lys-63'-linked ubiquitin are then conjugated to monoubiquitin; RNF8 is able to extend 'Lys-63'-linked ubiquitin chains in vitro. Deubiquitinated by USP51 at Lys-14 and Lys-16 (H2AK13Ub and H2AK15Ub, respectively) after damaged DNA is repaired. H2AK119Ub and ionizing radiation-induced 'Lys-63'-linked ubiquitination (H2AK13Ub and H2AK15Ub) are distinct events. Post-translationally, phosphorylation on Ser-2 (H2AS1ph) is enhanced during mitosis. Phosphorylation on Ser-2 by RPS6KA5/MSK1 directly represses transcription. Acetylation of H3 inhibits Ser-2 phosphorylation by RPS6KA5/MSK1. Phosphorylation at Thr-121 (H2AT120ph) by DCAF1 is present in the regulatory region of many tumor suppresor genes and down-regulates their transcription. Symmetric dimethylation on Arg-4 by the PRDM1/PRMT5 complex may play a crucial role in the germ-cell lineage. In terms of processing, glutamine methylation at Gln-105 (H2AQ104me) by FBL is specifically dedicated to polymerase I. It is present at 35S ribosomal DNA locus and impairs binding of the FACT complex. Post-translationally, crotonylation (Kcr) is specifically present in male germ cells and marks testis-specific genes in post-meiotic cells, including X-linked genes that escape sex chromosome inactivation in haploid cells. Crotonylation marks active promoters and enhancers and confers resistance to transcriptional repressors. It is also associated with post-meiotically activated genes on autosomes. Lactylated in macrophages by EP300/P300 by using lactoyl-CoA directly derived from endogenous or exogenous lactate, leading to stimulates gene transcription.

It localises to the nucleus. Its subcellular location is the chromosome. Core component of nucleosome. Nucleosomes wrap and compact DNA into chromatin, limiting DNA accessibility to the cellular machineries which require DNA as a template. Histones thereby play a central role in transcription regulation, DNA repair, DNA replication and chromosomal stability. DNA accessibility is regulated via a complex set of post-translational modifications of histones, also called histone code, and nucleosome remodeling. The chain is Histone H2A type 2-B from Homo sapiens (Human).